We begin with the raw amino-acid sequence, 527 residues long: Nucleus accumbens-associated protein 1 (527 aa).

Residues 30–94 (CDVSVVVKGH…CYTGRLSMNV (65 aa)) enclose the BTB domain. A disordered region spans residues 131 to 153 (QGLHAEEAPSSEPQSPVAQTSGW). Polar residues predominate over residues 141-152 (SEPQSPVAQTSG). Residue K167 forms a Glycyl lysine isopeptide (Lys-Gly) (interchain with G-Cter in SUMO1); alternate linkage. A Glycyl lysine isopeptide (Lys-Gly) (interchain with G-Cter in SUMO2); alternate cross-link involves residue K167. K183 participates in a covalent cross-link: Glycyl lysine isopeptide (Lys-Gly) (interchain with G-Cter in SUMO2). Phosphoserine is present on S188. The disordered stretch occupies residues 210–292 (DLAANRPHQP…DEEEDGGEEG (83 aa)). The span at 225–251 (APVVAAAQPAVAAGAGQPAGGVAAAGG) shows a compositional bias: low complexity. A compositionally biased stretch (polar residues) spans 255–277 (GPSTSERTSPGTSSAYTSDSPGS). S259 is modified (phosphoserine; by PKC). Residues 281-292 (EEDEEEDGGEEG) show a composition bias toward acidic residues. Residues K318, K452, K480, K483, and K498 each participate in a glycyl lysine isopeptide (Lys-Gly) (interchain with G-Cter in SUMO2) cross-link. One can recognise a BEN domain in the interval 374 to 471 (GTNVYITRAQ…DMCTNARRVV (98 aa)).

As to quaternary structure, homooligomer; mediated by the BTB domain. Interacts with HDAC3 and HDAC4. Interacts (via BTB domain) with CUL3, PSMD7 and RCOR1. Overexpressed in several types of carcinomas including ovarian serous carcinomas. Expression levels positively correlate with tumor recurrence in ovarian serous carcinomas, and intense immunoreactivity in primary ovarian tumors predicts early recurrence. Up-regulated in ovarian carcinomas after chemotherapy, suggesting a role in development of chemotherapy resistance in ovarian cancer.

It is found in the nucleus. The protein resides in the cytoplasm. Functionally, functions as a transcriptional repressor. Seems to function as a transcriptional corepressor in neuronal cells through recruitment of HDAC3 and HDAC4. Contributes to tumor progression, and tumor cell proliferation and survival. This may be mediated at least in part through repressing transcriptional activity of GADD45GIP1. Required for recruiting the proteasome from the nucleus to the cytoplasm and dendritic spines. The sequence is that of Nucleus accumbens-associated protein 1 (NACC1) from Homo sapiens (Human).